Here is a 1514-residue protein sequence, read N- to C-terminus: ABC transporter C family member 3 (1514 aa).

10 helical membrane-spanning segments follow: residues 35–55 (PLFL…VLFF), 83–103 (ALFC…LSGF), 116–136 (LVSS…SICL), 153–173 (LWLV…FVMY), 183–203 (LLVF…VAVL), 325–345 (ILVT…GPAL), 364–386 (YVLV…HWFF), 439–459 (WYMH…WILY), 463–483 (GLAS…NFPF), and 551–571 (FVFW…CILL). The ABC transmembrane type-1 1 domain maps to 325–606 (ILVTAFFAFI…LPDTISMIVQ (282 aa)). In terms of domain architecture, ABC transporter 1 spans 640–863 (VEVINSTLSW…GTDFMELIGA (224 aa)). 675-682 (GTVGSGKS) is an ATP binding site. A run of 5 helical transmembrane segments spans residues 940 to 960 (YITL…QVLF), 987 to 1007 (LSTL…CILL), 1077 to 1097 (IGII…FIPV), 1181 to 1201 (LSSL…TGVI), and 1205 to 1225 (LAGL…WLIW). In terms of domain architecture, ABC transmembrane type-1 2 spans 950–1232 (VPFILLGQVL…LIWTLCNLEN (283 aa)). The 233-residue stretch at 1271 to 1503 (IRDLQVRYAP…KSSSFSKLVA (233 aa)) folds into the ABC transporter 2 domain. Position 1303–1310 (1303–1310 (GRTGSGKS)) interacts with ATP.

The protein belongs to the ABC transporter superfamily. ABCC family. Conjugate transporter (TC 3.A.1.208) subfamily. Ubiquitous.

Its subcellular location is the membrane. The catalysed reaction is ATP + H2O + xenobioticSide 1 = ADP + phosphate + xenobioticSide 2.. Glutathione-conjugate transport is inhibited by decyl-glutathione and, to a lower extent, by GS-GS, but not by GSH. All transports are inhibited by vanadate. In terms of biological role, pump for glutathione S-conjugates. Mediates the transport of glutathione conjugates such as chlorodinitrobenzene-GS (DNB-GS), and of chlorophyll catabolites such as Bn-NCC-1. Also transports heavy metals such as cadmium (Cd). The polypeptide is ABC transporter C family member 3 (ABCC3) (Arabidopsis thaliana (Mouse-ear cress)).